We begin with the raw amino-acid sequence, 289 residues long: Aquaporin PIP1-2 (289 aa).

The tract at residues 1-36 (MEGKEEDVRLGANKFSERQPIGTAAQGAADDKDYKE) is disordered. The next 2 membrane-spanning stretches (helical) occupy residues 58–78 (IAEF…VMGV) and 93–115 (IAWS…SGGH). The NPA 1 motif lies at 117–119 (NPA). Helical transmembrane passes span 136–156 (LFYI…VKGF), 178–198 (GDGL…VFSA), and 212–232 (ILAP…TIPI). The short motif at 238-240 (NPA) is the NPA 2 element. A helical membrane pass occupies residues 260–280 (IFWVGPFIGAALAAIYHQVII).

Belongs to the MIP/aquaporin (TC 1.A.8) family. PIP (TC 1.A.8.11) subfamily. As to quaternary structure, interacts with PIP2-1 to form heteromers. Highly expressed in developing tassels and at lower levels in roots, shoots, ears and embryos. Expressed in the root growing zone at 5-6 mm from the root tip. Expressed in xylem parenchyma.

The protein resides in the cell membrane. Its function is as follows. Water channel required to facilitate the transport of water across cell membrane. Active as heteromers with PIP1-1, PIP2-1, PIP2-4 or PIP2-5, but not as homomers. The protein is Aquaporin PIP1-2 (PIP1-2) of Zea mays (Maize).